Consider the following 422-residue polypeptide: Probable cell wall mannoprotein PIR32 (422 aa).

The first 21 residues, 1 to 21 (MIHYLIFPILLIFFQIIKSSG), serve as a signal peptide directing secretion. 2 disordered regions span residues 116–143 (DGQVQKMKHKHDYSSGGGDDDDDDEDCF) and 155–313 (DYQD…EGYE). Residues 133-143 (GDDDDDDEDCF) show a composition bias toward acidic residues. The span at 158-169 (DMNTQEQANEDS) shows a compositional bias: polar residues. A coiled-coil region spans residues 179–214 (HQQVVDQNQQINEEEEETQEQQMQEENNNTNEIEDN). Composition is skewed to low complexity over residues 180-189 (QQVVDQNQQI) and 198-209 (EQQMQEENNNTN). N206 carries N-linked (GlcNAc...) asparagine glycosylation. Over residues 220–231 (ETIEEIYDDIDN) the composition is skewed to acidic residues. N-linked (GlcNAc...) asparagine glycans are attached at residues N232 and N237. Positions 238 to 248 (NSKKYHKKRPH) are enriched in basic residues. 2 stretches are compositionally biased toward basic and acidic residues: residues 249 to 284 (NNYENKHGHKDYHEDHHHNHRYKDHENGHEEDDHKW) and 300 to 311 (QEQKPKHEKSEG). Residue N328 is glycosylated (N-linked (GlcNAc...) asparagine).

This sequence belongs to the PIR protein family. O-glycosylated. Extensively O-mannosylated.

Its subcellular location is the secreted. It localises to the cell wall. Functionally, probable structural component of the cell wall involved in cell wall integrity and virulence. The protein is Probable cell wall mannoprotein PIR32 (PIR32) of Candida albicans (strain SC5314 / ATCC MYA-2876) (Yeast).